Consider the following 660-residue polypeptide: Phosphatidylinositol-3-phosphate phosphatase MTMR7 (660 aa).

The Myotubularin phosphatase domain maps to 126–504; sequence GWVLIDLSEE…FMYKFWSGMY (379 aa). Residues N250, N275, and I276 each coordinate a 1,2-diacyl-sn-glycero-3-phospho-(1D-myo-inositol-3-phosphate). Catalysis depends on C338, which acts as the Phosphocysteine intermediate. A 1,2-diacyl-sn-glycero-3-phospho-(1D-myo-inositol-3-phosphate) contacts are provided by S339, D340, G341, W342, D343, R344, and R384. A coiled-coil region spans residues 521 to 551; sequence LMAVKEETQQLEEELEALEERLEKIQKVQLN. A disordered region spans residues 554–660; sequence KVKSKQSEPS…DSDEAVFLTA (107 aa). Residues 566-596 are compositionally biased toward polar residues; that stretch reads SGFSTSDNSIANTPQDYSGNMKSFPSRSPSQ. T578 carries the post-translational modification Phosphothreonine. Residues 641–653 show a composition bias toward basic and acidic residues; that stretch reads APSEDSGKDRDSD.

This sequence belongs to the protein-tyrosine phosphatase family. Non-receptor class myotubularin subfamily. In terms of assembly, heterodimer (via C-terminus) with MTMR9 (via coiled coil domain); the interaction enhances MTMR7 catalytic activity. Does not homodimerize. Interacts with RAB1B (in GDP-bound form). As to expression, expressed specifically in brain.

The protein resides in the cytoplasm. The protein localises to the endomembrane system. The enzyme catalyses a 1,2-diacyl-sn-glycero-3-phospho-(1D-myo-inositol-3-phosphate) + H2O = a 1,2-diacyl-sn-glycero-3-phospho-(1D-myo-inositol) + phosphate. It carries out the reaction 1D-myo-inositol 1,3-bisphosphate + H2O = 1D-myo-inositol 1-phosphate + phosphate. Interaction with MTMR9 increases phosphatase activity. Functionally, lipid phosphatase that specifically dephosphorylates the D-3 position of phosphatidylinositol 3-phosphate (PtdIns(3)P) and inositol 1,3-bisphosphate (Ins(1,3)P2). This Homo sapiens (Human) protein is Phosphatidylinositol-3-phosphate phosphatase MTMR7.